Consider the following 233-residue polypeptide: MVVEDALKTSASEDQAKTETNPKPREEDDEPEEGEIVGDEESASKPSKGIAPESHALEHSWTFWFDSPAAKSAKTKQEDWGSSIRPIYTFSTVEEFWSIYNNIRHPSKLAIGTDFHCFKYKIEPKWEDPVCANGGKWTVTLPKGKSDTSWLYTLLGMIGEQFDHGDEICGAVVNVRNRQEKISIWTKNAINEAAQLSIGKQWKGLLDYNETIGFIFHEDAMRHERSAKNKYVV.

The tract at residues 1 to 51 is disordered; sequence MVVEDALKTSASEDQAKTETNPKPREEDDEPEEGEIVGDEESASKPSKGIA. Over residues 14–26 the composition is skewed to basic and acidic residues; it reads DQAKTETNPKPRE. A compositionally biased stretch (acidic residues) spans 27–41; it reads EDDEPEEGEIVGDEE. EIF4G-binding regions lie at residues 55–58 and 65–104; these read HALE and FDSP…NNIR. MRNA-binding positions include 76–81, K108, and 126–127; these read KQEDWG and WE. C131 and C169 are joined by a disulfide. Residues 152 to 161 are EIF4G-binding; it reads YTLLGMIGEQ. MRNA-binding positions include 176-181 and 221-225; these read RNRQEK and MRHER.

This sequence belongs to the eukaryotic initiation factor 4E family. In terms of assembly, EIF4F is a multi-subunit complex, the composition of which varies with external and internal environmental conditions. It is composed of at least EIF4A, EIF4E and EIF4G. EIF4E is also known to interact with other partners. In higher plants two isoforms of EIF4F have been identified, named isoform EIF4F and isoform EIF(iso)4F. Isoform EIF4F has subunits p220 and p26, whereas isoform EIF(iso)4F has subunits p82 and p28. As to quaternary structure, (Microbial infection) Does not interact with the VPg of Plum pox virus (PPV) strain D. Post-translationally, according to the redox status, the Cys-131-Cys-169 disulfide bridge may have a role in regulating protein function by affecting its ability to bind capped mRNA. As to expression, mostly expressed in leaves, flower buds, leaf buds and anthers, to a lower extent in roots, stems and green immature fruit, and, at low levels, in petals.

The protein resides in the nucleus. It is found in the cytoplasm. In terms of biological role, component of the protein complex eIF4F, which is involved in the recognition of the mRNA cap, ATP-dependent unwinding of 5'-terminal secondary structure and recruitment of mRNA to the ribosome. Recognizes and binds the 7-methylguanosine-containing mRNA cap during an early step in the initiation of protein synthesis and facilitates ribosome binding by inducing the unwinding of the mRNAs secondary structures. Functionally, (Microbial infection) Not involved in the plum pox virus (PPV) strain D infection process. This Prunus domestica (Garden plum) protein is Eukaryotic translation initiation factor 4E-1.